The following is a 466-amino-acid chain: UDP-N-acetylmuramate--L-alanine ligase (466 aa).

Position 117–123 (117–123 (GTHGKTT)) interacts with ATP.

Belongs to the MurCDEF family.

The protein localises to the cytoplasm. It carries out the reaction UDP-N-acetyl-alpha-D-muramate + L-alanine + ATP = UDP-N-acetyl-alpha-D-muramoyl-L-alanine + ADP + phosphate + H(+). It participates in cell wall biogenesis; peptidoglycan biosynthesis. Functionally, cell wall formation. The sequence is that of UDP-N-acetylmuramate--L-alanine ligase from Streptomyces griseus subsp. griseus (strain JCM 4626 / CBS 651.72 / NBRC 13350 / KCC S-0626 / ISP 5235).